A 377-amino-acid chain; its full sequence is F-box protein At2g05970 (377 aa).

The region spanning Ala-8–Pro-55 is the F-box domain.

This Arabidopsis thaliana (Mouse-ear cress) protein is F-box protein At2g05970.